A 309-amino-acid chain; its full sequence is MVKVYAPASSANMSVGFDVLGAAVTPVDGSLLGDVVSVDAAESFTLNNLGRFADKLPSAPRENIVYQCWERFCQELGKQIPVAMTLEKNMPIGSGLGSSACSVVAALVAMNEFCGKPLNDTRLLAIMGELEGRISGSIHYDNVAPCFLGGMQLMIEENGIISQQVPGFDEWLWVLAYPGINVSTAEARAILPAQYRRQDCIAHGRHLAGFIHACYSRQPQLAAKLMKDVIAEPYRARLLPGFSQARQAVAEIGALASGISGSGPTLFALCDKPDTAQRVADWLGKNYLQNQEGFVHICQLDTAGARVLG.

91-101 (PIGSGLGSSAC) contributes to the ATP binding site.

The protein belongs to the GHMP kinase family. Homoserine kinase subfamily.

It localises to the cytoplasm. It catalyses the reaction L-homoserine + ATP = O-phospho-L-homoserine + ADP + H(+). It functions in the pathway amino-acid biosynthesis; L-threonine biosynthesis; L-threonine from L-aspartate: step 4/5. Its function is as follows. Catalyzes the ATP-dependent phosphorylation of L-homoserine to L-homoserine phosphate. The protein is Homoserine kinase of Citrobacter koseri (strain ATCC BAA-895 / CDC 4225-83 / SGSC4696).